A 164-amino-acid polypeptide reads, in one-letter code: Large ribosomal subunit protein uL15 (164 aa).

Disordered regions lie at residues 1–49 and 143–164; these read MTKL…SIAG and EKAG…SAEA. Gly residues predominate over residues 22 to 36; the sequence is RGPGSGKGKTAGRGV.

The protein belongs to the universal ribosomal protein uL15 family. As to quaternary structure, part of the 50S ribosomal subunit.

In terms of biological role, binds to the 23S rRNA. This chain is Large ribosomal subunit protein uL15, found in Phenylobacterium zucineum (strain HLK1).